Reading from the N-terminus, the 412-residue chain is Exodeoxyribonuclease 7 large subunit (412 aa).

It belongs to the XseA family. In terms of assembly, heterooligomer composed of large and small subunits.

It is found in the cytoplasm. It carries out the reaction Exonucleolytic cleavage in either 5'- to 3'- or 3'- to 5'-direction to yield nucleoside 5'-phosphates.. Functionally, bidirectionally degrades single-stranded DNA into large acid-insoluble oligonucleotides, which are then degraded further into small acid-soluble oligonucleotides. This Nostoc sp. (strain PCC 7120 / SAG 25.82 / UTEX 2576) protein is Exodeoxyribonuclease 7 large subunit.